A 289-amino-acid chain; its full sequence is Polyisoprenoid diphosphate/phosphate phosphohydrolase PLPP6 (289 aa).

A disordered region spans residues 1–81; the sequence is MQSPRRNAEG…SSQALPPQLP (81 aa). At 1 to 126 the chain is on the cytoplasmic side; the sequence is MQSPRRNAEG…ESSSWGSMRP (126 aa). Residues serine 23, serine 30, and serine 64 each carry the phosphoserine modification. A helical transmembrane segment spans residues 127–147; sequence LMKLLEISGHGIPWLLGTLYC. Over 148–158 the chain is Lumenal; sequence LSRSDSWAGRE. A helical membrane pass occupies residues 159–179; it reads VLMNLLFALLLDLLLVSLIKG. The segment at 178 to 186 is phosphatase sequence motif I; it reads KGLVRRRRP. Residues 180 to 222 lie on the Cytoplasmic side of the membrane; the sequence is LVRRRRPAHNQMDMFFTISVDKYSFPSGHTTRAALVSRFILNH. The interval 205–208 is phosphatase sequence motif II; it reads PSGH. Histidine 208 acts as the Proton donors in catalysis. Residues 223–243 form a helical membrane-spanning segment; that stretch reads LVLAIPLRVLVVLWAFILGLS. Residues 243 to 254 are phosphatase sequence motif III; sequence SRVMLGRHNVTD. Topologically, residues 244–254 are lumenal; sequence RVMLGRHNVTD. Histidine 250 serves as the catalytic Nucleophile. A helical membrane pass occupies residues 255 to 275; the sequence is VAFGFFLGYMQYSIVDYCWLS. At 276–289 the chain is on the cytoplasmic side; sequence PRTAPVLFVLWNQP.

Belongs to the PA-phosphatase related phosphoesterase family. In terms of processing, phosphorylation by PKC activates the phosphatase activity towards presqualene diphosphate.

It localises to the endoplasmic reticulum membrane. The protein localises to the nucleus envelope. Its subcellular location is the nucleus inner membrane. It carries out the reaction presqualene diphosphate + H2O = presqualene phosphate + phosphate + H(+). The catalysed reaction is presqualene phosphate + H2O = presqualene alcohol + phosphate. It catalyses the reaction (2E,6E)-farnesyl diphosphate + H2O = (2E,6E)-farnesyl phosphate + phosphate + H(+). The enzyme catalyses (2E,6E)-farnesyl phosphate + H2O = (2E,6E)-farnesol + phosphate. It carries out the reaction (2E,6E,10E)-geranylgeranyl diphosphate + H2O = (2E,6E,10E)-geranylgeranyl phosphate + phosphate + H(+). The catalysed reaction is (2E,6E,10E)-geranylgeranyl phosphate + H2O = (2E,6E,10E)-geranylgeraniol + phosphate. It catalyses the reaction (2E)-geranyl diphosphate + H2O = (2E)-geranyl phosphate + phosphate + H(+). The enzyme catalyses (2E)-geranyl phosphate + H2O = (2E)-geraniol + phosphate. It carries out the reaction 1,2-dihexadecanoyl-sn-glycero-3-phosphate + H2O = 1,2-dihexadecanoyl-sn-glycerol + phosphate. Magnesium-independent polyisoprenoid diphosphatase that catalyzes the sequential dephosphorylation of presqualene, farnesyl, geranyl and geranylgeranyl diphosphates. Functions in the innate immune response through the dephosphorylation of presqualene diphosphate which acts as a potent inhibitor of the signaling pathways contributing to polymorphonuclear neutrophils activation. May regulate the biosynthesis of cholesterol and related sterols by dephosphorylating presqualene and farnesyl diphosphate, two key intermediates in this biosynthetic pathway. May also play a role in protein prenylation by acting on farnesyl diphosphate and its derivative geranylgeranyl diphosphate, two precursors for the addition of isoprenoid anchors to membrane proteins. Has a lower activity towards phosphatidic acid (PA), but through phosphatidic acid dephosphorylation may participate in the biosynthesis of phospholipids and triacylglycerols. May also act on ceramide-1-P, lysophosphatidic acid (LPA) and sphing-4-enine 1-phosphate/sphingosine-1-phosphate. The chain is Polyisoprenoid diphosphate/phosphate phosphohydrolase PLPP6 from Bos taurus (Bovine).